Here is a 395-residue protein sequence, read N- to C-terminus: Nucleoside diphosphate kinase homolog 7 (395 aa).

In terms of domain architecture, DM10 spans 22-110 (QSERFAFIAE…YTARQLGSRK (89 aa)).

The protein belongs to the NDK family. As to quaternary structure, component of sperm flagellar doublet microtubules. Component of the gamma-tubulin ring complex. Widely expressed. Expressed in the flagellum of epididymal sperm but not in testicular sperm (at protein level).

It localises to the cytoplasm. It is found in the cytoskeleton. Its subcellular location is the microtubule organizing center. The protein localises to the centrosome. The protein resides in the nucleus. It localises to the spindle. It is found in the cilium axoneme. Its subcellular location is the flagellum axoneme. The protein localises to the cell projection. The protein resides in the cilium. Its function is as follows. Possesses an intrinsic kinase activity. Displays 3'-5' exonuclease activity with a preference for single-stranded DNA. Does not seem to have nucleoside diphosphate kinase activity. Functional component of the gamma-tubulin ring complex, implicated in the regulation of the microtubule-nucleating activity of the gamma-tubulin ring complex in centrosomes, in a kinase activity-dependent manner. Part of the dynein-decorated doublet microtubules (DMTs) in cilia axoneme, which is required for motile cilia beating. The sequence is that of Nucleoside diphosphate kinase homolog 7 (Nme7) from Rattus norvegicus (Rat).